The primary structure comprises 170 residues: UPF0260 protein RPC_1790 (170 aa).

This sequence belongs to the UPF0260 family.

The chain is UPF0260 protein RPC_1790 from Rhodopseudomonas palustris (strain BisB18).